Reading from the N-terminus, the 255-residue chain is 5-oxoprolinase subunit A (255 aa).

It belongs to the LamB/PxpA family. Forms a complex composed of PxpA, PxpB and PxpC.

It carries out the reaction 5-oxo-L-proline + ATP + 2 H2O = L-glutamate + ADP + phosphate + H(+). Its function is as follows. Catalyzes the cleavage of 5-oxoproline to form L-glutamate coupled to the hydrolysis of ATP to ADP and inorganic phosphate. This Corynebacterium efficiens (strain DSM 44549 / YS-314 / AJ 12310 / JCM 11189 / NBRC 100395) protein is 5-oxoprolinase subunit A.